The sequence spans 139 residues: MIFMEVTLAIVKPDGVKRGLIGEILKRYENKGLRLKAAKVVTPSIELLEKHYEEHKGKPFFKPLIEYMSSGPVFAMVLEGENAVKLVRMINGATKVEDALPGTIRGDFASSTTYNVVHGSDSVESAKREIALWFPELIL.

Positions 12, 60, 88, 94, 105, and 115 each coordinate ATP. The active-site Pros-phosphohistidine intermediate is the H118.

Belongs to the NDK family. In terms of assembly, homotetramer. It depends on Mg(2+) as a cofactor.

The protein resides in the cytoplasm. It carries out the reaction a 2'-deoxyribonucleoside 5'-diphosphate + ATP = a 2'-deoxyribonucleoside 5'-triphosphate + ADP. The enzyme catalyses a ribonucleoside 5'-diphosphate + ATP = a ribonucleoside 5'-triphosphate + ADP. Its function is as follows. Major role in the synthesis of nucleoside triphosphates other than ATP. The ATP gamma phosphate is transferred to the NDP beta phosphate via a ping-pong mechanism, using a phosphorylated active-site intermediate. The sequence is that of Nucleoside diphosphate kinase from Caldanaerobacter subterraneus subsp. tengcongensis (strain DSM 15242 / JCM 11007 / NBRC 100824 / MB4) (Thermoanaerobacter tengcongensis).